A 72-amino-acid chain; its full sequence is Translational regulator CsrA (72 aa).

The protein belongs to the CsrA/RsmA family. As to quaternary structure, homodimer; the beta-strands of each monomer intercalate to form a hydrophobic core, while the alpha-helices form wings that extend away from the core.

It localises to the cytoplasm. In terms of biological role, a translational regulator that binds mRNA to regulate translation initiation and/or mRNA stability. Usually binds in the 5'-UTR at or near the Shine-Dalgarno sequence preventing ribosome-binding, thus repressing translation. Its main target seems to be the major flagellin gene, while its function is anatagonized by FliW. This chain is Translational regulator CsrA, found in Clostridium botulinum (strain Okra / Type B1).